Consider the following 406-residue polypeptide: Kelch domain-containing protein 1 (406 aa).

Kelch repeat units lie at residues 24–76, 80–134, 135–181, 208–258, 260–307, and 311–361; these read FLYV…CGAC, KLYI…VYKD, RLIY…TKTQ, KGYI…PIAD, KLFL…ACLG, and EIMV…LESQ.

Component of a CRL5 E3 ubiquitin-protein ligase complex, also named ECS (Elongin BC-CUL2/5-SOCS-box protein) complex, composed of CUL5, Elongin BC (ELOB and ELOC), RBX1 and substrate-specific adapter KLHDC1. Widely expressed, with high levels in skeletal muscle, pancreas and liver. Undetectable in peripheral blood leukocytes.

It is found in the cytoplasm. Its subcellular location is the cytosol. Its pathway is protein modification; protein ubiquitination. Substrate-recognition component of a Cul5-RING (CRL5) E3 ubiquitin-protein ligase complex of the DesCEND (destruction via C-end degrons) pathway, which recognizes a C-degron located at the extreme C terminus of target proteins, leading to their ubiquitination and degradation. The C-degron recognized by the DesCEND pathway is usually a motif of less than ten residues and can be present in full-length proteins, truncated proteins or proteolytically cleaved forms. The CRL5(KLHDC1) complex mediates ubiquitination and degradation of truncated SELENOS selenoprotein produced by failed UGA/Sec decoding, which ends with a glycine. The chain is Kelch domain-containing protein 1 from Homo sapiens (Human).